The chain runs to 175 residues: Gamma-crystallin A (175 aa).

2 Beta/gamma crystallin 'Greek key' domains span residues 2 to 40 (GKIT…RVDV) and 41 to 83 (HSWF…RLIP). The segment at 84 to 88 (QHTGT) is connecting peptide. 2 Beta/gamma crystallin 'Greek key' domains span residues 89-129 (FRMR…RVLE) and 130-172 (GSWV…RRVM).

Belongs to the beta/gamma-crystallin family.

Crystallins are the dominant structural components of the vertebrate eye lens. This chain is Gamma-crystallin A (CRYGA), found in Bos taurus (Bovine).